We begin with the raw amino-acid sequence, 142 residues long: Large ribosomal subunit protein uL11 (142 aa).

It belongs to the universal ribosomal protein uL11 family. As to quaternary structure, part of the ribosomal stalk of the 50S ribosomal subunit. Interacts with L10 and the large rRNA to form the base of the stalk. L10 forms an elongated spine to which L12 dimers bind in a sequential fashion forming a multimeric L10(L12)X complex. In terms of processing, one or more lysine residues are methylated.

Functionally, forms part of the ribosomal stalk which helps the ribosome interact with GTP-bound translation factors. This Leptospira borgpetersenii serovar Hardjo-bovis (strain JB197) protein is Large ribosomal subunit protein uL11.